The primary structure comprises 396 residues: Elongation factor Tu 2 (396 aa).

The tr-type G domain maps to 10–206; the sequence is KPHVNVGTIG…ALDTYIPTPK (197 aa). Positions 19–26 are G1; it reads GHVDHGKT. 19 to 26 contributes to the GTP binding site; it reads GHVDHGKT. Residue Thr-26 participates in Mg(2+) binding. Residues 60–64 form a G2 region; sequence GITIS. Residues 81–84 form a G3 region; the sequence is DCPG. Residues 81-85 and 136-139 each bind GTP; these read DCPGH and NKAD. The tract at residues 136-139 is G4; it reads NKAD. Residues 174 to 176 form a G5 region; it reads SAL.

Belongs to the TRAFAC class translation factor GTPase superfamily. Classic translation factor GTPase family. EF-Tu/EF-1A subfamily. As to quaternary structure, monomer.

The protein resides in the cytoplasm. It catalyses the reaction GTP + H2O = GDP + phosphate + H(+). Its function is as follows. GTP hydrolase that promotes the GTP-dependent binding of aminoacyl-tRNA to the A-site of ribosomes during protein biosynthesis. The protein is Elongation factor Tu 2 of Ruthia magnifica subsp. Calyptogena magnifica.